We begin with the raw amino-acid sequence, 519 residues long: Flavonoid 8-hydroxylase 2, chloroplastic (519 aa).

The N-terminal 46 residues, 1–46 (MEVLQASSLSFQLLRRHSRNNLINKFRNPSLPRIHMPRQNIDLKTF), are a transit peptide targeting the chloroplast. The Rieske domain occupies 77–188 (WYPVASVCDL…SCVRNGIVWF (112 aa)). [2Fe-2S] cluster contacts are provided by C119, H121, C139, and H142. Residues H241 and H246 each coordinate Fe cation. The short motif at 447–450 (CSSC) is the Redox-active motif element. Transmembrane regions (helical) follow at residues 462-478 (IGLQ…AAAV) and 485-501 (YSMV…SKWL).

[2Fe-2S] cluster serves as cofactor. As to expression, glandular trichome-specific expression in leaves.

It localises to the plastid. The protein localises to the chloroplast membrane. Its subcellular location is the cytoplasm. The enzyme catalyses salvigenin + 2 reduced [2Fe-2S]-[ferredoxin] + O2 + 2 H(+) = 8-hydroxysalvigenin + 2 oxidized [2Fe-2S]-[ferredoxin] + H2O. Its pathway is flavonoid metabolism. Rieske-type, PAO-family oxygenase involved in the biosynthesis of polymethoxylated flavonoids natural products such as nevadensin and salvigenin, aroma compounds which contribute to the flavor of sweet basil, and exhibit pharmacological activities such as anti-allergic, anti-oxidant, antibacterial, anti-proliferative, and anti-inflammatory effects. Catalyzes the hydroxylation of salvigenin to produce 8-hydroxysalvigenin (8-OH-SALV). This Ocimum basilicum (Sweet basil) protein is Flavonoid 8-hydroxylase 2, chloroplastic.